The primary structure comprises 373 residues: Septin homolog spn3 (373 aa).

The 277-residue stretch at 10 to 286 (KGIPLNLMVV…ETYRTEKLST (277 aa)) folds into the Septin-type G domain. The G1 motif stretch occupies residues 20 to 27 (GDVGLGRT). GTP is bound at residue 20 to 27 (GDVGLGRT). The interval 79–82 (DTPH) is G3 motif. The interval 161–164 (AKAD) is G4 motif. GTP contacts are provided by residues 162–170 (KADSLTAQE) and Arg-235. Ser-303 is subject to Phosphoserine. A coiled-coil region spans residues 311-357 (EDRLRAIELSVQKEIEEKRRQLLAREEALRALEEKLAASTAAMANAS).

Belongs to the TRAFAC class TrmE-Era-EngA-EngB-Septin-like GTPase superfamily. Septin GTPase family. As to quaternary structure, component of the septin complex composed of two copies of each spn1, spn2, spn3 and spn4.

It is found in the cytoplasm. Its subcellular location is the cell cortex. Functionally, plays a role in the cell cycle. Involved in a late stage of septum formation leading to the separation of the daughter cells. The protein is Septin homolog spn3 (spn3) of Schizosaccharomyces pombe (strain 972 / ATCC 24843) (Fission yeast).